The chain runs to 287 residues: Histone H1 (287 aa).

The segment covering methionine 1–glutamate 11 has biased composition (low complexity). 2 disordered regions span residues methionine 1–proline 58 and tyrosine 120–lysine 287. Positions glycine 33–serine 51 are enriched in basic residues. An H15 domain is found at threonine 55 to serine 124. Basic residues predominate over residues alanine 135 to proline 202. Residues lysine 203–threonine 248 show a composition bias toward low complexity. Residues proline 276–lysine 287 are compositionally biased toward basic residues.

It belongs to the histone H1/H5 family.

Its subcellular location is the nucleus. The protein resides in the chromosome. In terms of biological role, histones H1 are necessary for the condensation of nucleosome chains into higher-order structures. This Solanum lycopersicum (Tomato) protein is Histone H1.